The chain runs to 263 residues: Acyl-[acyl-carrier-protein]--UDP-N-acetylglucosamine O-acyltransferase (263 aa).

It belongs to the transferase hexapeptide repeat family. LpxA subfamily. Homotrimer.

It localises to the cytoplasm. It catalyses the reaction a (3R)-hydroxyacyl-[ACP] + UDP-N-acetyl-alpha-D-glucosamine = a UDP-3-O-[(3R)-3-hydroxyacyl]-N-acetyl-alpha-D-glucosamine + holo-[ACP]. It participates in glycolipid biosynthesis; lipid IV(A) biosynthesis; lipid IV(A) from (3R)-3-hydroxytetradecanoyl-[acyl-carrier-protein] and UDP-N-acetyl-alpha-D-glucosamine: step 1/6. Functionally, involved in the biosynthesis of lipid A, a phosphorylated glycolipid that anchors the lipopolysaccharide to the outer membrane of the cell. In Xanthomonas axonopodis pv. citri (strain 306), this protein is Acyl-[acyl-carrier-protein]--UDP-N-acetylglucosamine O-acyltransferase.